The sequence spans 867 residues: Leucine--tRNA ligase (867 aa).

Positions 40–51 (PYPSGAGLHVGH) match the 'HIGH' region motif. A 'KMSKS' region motif is present at residues 638-642 (KMSKS). Position 641 (K641) interacts with ATP.

This sequence belongs to the class-I aminoacyl-tRNA synthetase family.

The protein localises to the cytoplasm. The enzyme catalyses tRNA(Leu) + L-leucine + ATP = L-leucyl-tRNA(Leu) + AMP + diphosphate. This is Leucine--tRNA ligase from Leptospira biflexa serovar Patoc (strain Patoc 1 / Ames).